The chain runs to 206 residues: Protein GrpE (206 aa).

The span at 1–17 (MSNESIKAEQDLIHEGV) shows a compositional bias: basic and acidic residues. A disordered region spans residues 1-20 (MSNESIKAEQDLIHEGVESE).

It belongs to the GrpE family. As to quaternary structure, homodimer.

It localises to the cytoplasm. Functionally, participates actively in the response to hyperosmotic and heat shock by preventing the aggregation of stress-denatured proteins, in association with DnaK and GrpE. It is the nucleotide exchange factor for DnaK and may function as a thermosensor. Unfolded proteins bind initially to DnaJ; upon interaction with the DnaJ-bound protein, DnaK hydrolyzes its bound ATP, resulting in the formation of a stable complex. GrpE releases ADP from DnaK; ATP binding to DnaK triggers the release of the substrate protein, thus completing the reaction cycle. Several rounds of ATP-dependent interactions between DnaJ, DnaK and GrpE are required for fully efficient folding. The sequence is that of Protein GrpE from Shewanella oneidensis (strain ATCC 700550 / JCM 31522 / CIP 106686 / LMG 19005 / NCIMB 14063 / MR-1).